The sequence spans 225 residues: UPF0725 protein At5g63820 (225 aa).

Belongs to the UPF0725 (EMB2204) family.

The protein is UPF0725 protein At5g63820 of Arabidopsis thaliana (Mouse-ear cress).